The chain runs to 147 residues: Large ribosomal subunit protein uL15 (147 aa).

The disordered stretch occupies residues 1–55; sequence MKLHEIAPQPGSTKRRRRVGRGVSAGQGASCGLGMRGQKSRSGTGTRPGFEGGQM. A compositionally biased stretch (gly residues) spans 23–35; sequence VSAGQGASCGLGM.

It belongs to the universal ribosomal protein uL15 family. As to quaternary structure, part of the 50S ribosomal subunit.

Binds to the 23S rRNA. The protein is Large ribosomal subunit protein uL15 of Microcystis aeruginosa (strain NIES-843 / IAM M-2473).